Here is a 488-residue protein sequence, read N- to C-terminus: Glutamyl-tRNA(Gln) amidotransferase subunit A (488 aa).

Catalysis depends on charge relay system residues Lys-77 and Ser-152. Ser-176 functions as the Acyl-ester intermediate in the catalytic mechanism.

Belongs to the amidase family. GatA subfamily. As to quaternary structure, heterotrimer of A, B and C subunits.

The catalysed reaction is L-glutamyl-tRNA(Gln) + L-glutamine + ATP + H2O = L-glutaminyl-tRNA(Gln) + L-glutamate + ADP + phosphate + H(+). Functionally, allows the formation of correctly charged Gln-tRNA(Gln) through the transamidation of misacylated Glu-tRNA(Gln) in organisms which lack glutaminyl-tRNA synthetase. The reaction takes place in the presence of glutamine and ATP through an activated gamma-phospho-Glu-tRNA(Gln). The polypeptide is Glutamyl-tRNA(Gln) amidotransferase subunit A (Streptococcus pyogenes serotype M2 (strain MGAS10270)).